The primary structure comprises 136 residues: Gonadotropin subunit beta-2 (136 aa).

The first 21 residues, 1 to 21 (MVCLFLGASSFIWSLAPAAAA), serve as a signal peptide directing secretion. 6 disulfides stabilise this stretch: Cys-27-Cys-75, Cys-41-Cys-90, Cys-44-Cys-128, Cys-52-Cys-106, Cys-56-Cys-108, and Cys-111-Cys-118. The N-linked (GlcNAc...) asparagine glycan is linked to Asn-31.

The protein belongs to the glycoprotein hormones subunit beta family. As to quaternary structure, heterodimer of an alpha and a beta chain.

It localises to the secreted. Its function is as follows. Involved in gametogenesis and steroidogenesis. The polypeptide is Gonadotropin subunit beta-2 (cgbb) (Fundulus heteroclitus (Killifish)).